Consider the following 271-residue polypeptide: MATELKKGPLPTDIEETVITIMREEGVRYITAKILRMRLESKYQMEFGPHKAAIDDIVARAMQRPEFKKQLELALKEKDASKSSGGKGSKRARSAGAEAPSKTKKEMTEKPKKPADYPKPAVSSYLLFVADQREELKAKNPGMQNTAILQTLGKMWSDASDDVKEHYRKKAEEDKARFRREVDEYKRQGGKEYGRGGKIKKDSNAPKRAMTSFMFFSSDFRSKHSDLSIVEMSKAAGAAWKELGPEERKVYEEMAEKDKERYKREMAALPK.

The region spanning 8-63 is the DEK-C domain; the sequence is GPLPTDIEETVITIMREEGVRYITAKILRMRLESKYQMEFGPHKAAIDDIVARAMQ. Residues 75–118 form a disordered region; it reads LKEKDASKSSGGKGSKRARSAGAEAPSKTKKEMTEKPKKPADYP. Positions 101 to 116 are enriched in basic and acidic residues; sequence SKTKKEMTEKPKKPAD. DNA-binding regions (HMG box) lie at residues 118 to 186 and 206 to 270; these read PKPA…DEYK and PKRA…AALP.

Its subcellular location is the nucleus. Functionally, unknown. May play a role in transcription and/or DNA replication. It is not known whether this protein is DNA sequence binding-specific or not. The polypeptide is High mobility group protein homolog TDP-1 (Trypanosoma brucei rhodesiense).